We begin with the raw amino-acid sequence, 424 residues long: Methylthioribose-1-phosphate isomerase (424 aa).

Catalysis depends on D281, which acts as the Proton donor.

This sequence belongs to the eIF-2B alpha/beta/delta subunits family. MtnA subfamily.

The protein resides in the cytoplasm. It localises to the nucleus. It catalyses the reaction 5-(methylsulfanyl)-alpha-D-ribose 1-phosphate = 5-(methylsulfanyl)-D-ribulose 1-phosphate. The protein operates within amino-acid biosynthesis; L-methionine biosynthesis via salvage pathway; L-methionine from S-methyl-5-thio-alpha-D-ribose 1-phosphate: step 1/6. Functionally, catalyzes the interconversion of methylthioribose-1-phosphate (MTR-1-P) into methylthioribulose-1-phosphate (MTRu-1-P). The protein is Methylthioribose-1-phosphate isomerase of Candida dubliniensis (strain CD36 / ATCC MYA-646 / CBS 7987 / NCPF 3949 / NRRL Y-17841) (Yeast).